Consider the following 223-residue polypeptide: Acetate CoA-transferase subunit beta (223 aa).

Residue E46 is part of the active site.

This sequence belongs to the 3-oxoacid CoA-transferase subunit B family. Heterotetramer composed of two alpha subunits (AtoD) and two beta subunits (AtoA).

The catalysed reaction is an acyl-CoA + acetate = a carboxylate + acetyl-CoA. The enzyme catalyses acetoacetate + acetyl-CoA = acetoacetyl-CoA + acetate. Its pathway is lipid metabolism; short-chain fatty acid metabolism. Its function is as follows. Coenzyme A transferase which is involved in short-chain fatty acid degradation and catalyzes the activation of short-chain fatty acids to their respective CoA thiolesters. The chain is Acetate CoA-transferase subunit beta (atoA) from Haemophilus influenzae (strain ATCC 51907 / DSM 11121 / KW20 / Rd).